A 63-amino-acid polypeptide reads, in one-letter code: Large ribosomal subunit protein uL29 (63 aa).

It belongs to the universal ribosomal protein uL29 family.

This Photobacterium profundum (strain SS9) protein is Large ribosomal subunit protein uL29.